The primary structure comprises 317 residues: Melanocyte-stimulating hormone receptor (317 aa).

Residues 1-37 (MPMQGAQRRLLGSLNSTPTATPNLGLAANHTGAPCLE) lie on the Extracellular side of the membrane. Asn29 carries an N-linked (GlcNAc...) asparagine glycan. Residues 38–63 (VSIPDGLFLSLGLVSLVENVLVVAAI) traverse the membrane as a helical segment. The Cytoplasmic segment spans residues 64-72 (AKNRNLHSP). The helical transmembrane segment at 73–93 (MYCFICCLALSDLLVSGSNML) threads the bilayer. The Extracellular segment spans residues 94–118 (ETAVILLLEAGALATRASVVQQLQN). The helical transmembrane segment at 119–140 (TIDVLTCSSMLCSLCFLGAIAV) threads the bilayer. Topologically, residues 141 to 163 (DRYVSIFYALRYHSIVTLPRARR) are cytoplasmic. The helical transmembrane segment at 164-183 (AIAAIWVASVLSSTLFIAYC) threads the bilayer. Residues 184–191 (DHAAVLLC) are Extracellular-facing. The helical transmembrane segment at 192–211 (LVVFFLAMLVLMAVLYVHML) threads the bilayer. Residues 212–240 (ARACQHAQGITRLHKRQLPAHQGFGLRGA) lie on the Cytoplasmic side of the membrane. A helical transmembrane segment spans residues 241–266 (ATLTILLGIFFLCWGPFFLHLMLVVL). Residues 267-279 (CPQHLTCSCIFKN) are Extracellular-facing. The helical transmembrane segment at 280 to 300 (FKVFLTLIICNTIIDPLIYAF) threads the bilayer. At 301-317 (RSQELCRTLKEVLLCSW) the chain is on the cytoplasmic side. Cys315 carries the S-palmitoyl cysteine lipid modification.

It belongs to the G-protein coupled receptor 1 family. As to quaternary structure, interacts with MGRN1, but does not undergo MGRN1-mediated ubiquitination; this interaction competes with GNAS-binding and thus inhibits agonist-induced cAMP production. Interacts with OPN3; the interaction results in a decrease in MC1R-mediated cAMP signaling and ultimately a decrease in melanin production in melanocytes.

The protein resides in the cell membrane. Its function is as follows. Receptor for MSH (alpha, beta and gamma) and ACTH. The activity of this receptor is mediated by G proteins which activate adenylate cyclase. Mediates melanogenesis, the production of eumelanin (black/brown) and phaeomelanin (red/yellow), via regulation of cAMP signaling in melanocytes. In Alouatta palliata (Mantled howler monkey), this protein is Melanocyte-stimulating hormone receptor (MC1R).